Consider the following 445-residue polypeptide: MESDNLQDPQEETLTCSICQGIFMNPVYLKCGHKFCEACLLLFQEDIKFPAYCPMCMQPFNQEYINDISLKKQVSIVRKKRLMEYLNSEEHKCVTHKAKKMIFCDKSKILLCHLCSDSQEHSGHTHCSIDVAVQEKMEELLKHMDSLWRRLKIQQNYVEKERRTTLWWLKSMKLREEVIKRVYGKQCPPLSEERDQHIECLRHQSNTTLEELRKSEATIVHERNQLTEVYRELMTMSQRPYQELLVQDLDDLFRRSKLAAKLDMPQGMIPRLRAHSIPGLTARLNSFRVKISFKHSIMFGYTSLRPFDIRLLHESTSLDSAETHRVSWGKKSFSRGKYYWEVDLKDYRRWTVGVCKDPWLRGRSYVATPTDLFLECLRKDDHYILITRIGGEHYIEKPVGQVGVFLDCEGGYVSFVDVAKSSLILSYSPGTFHCAVRPFFSAVYT.

An RING-type zinc finger spans residues C16–M57. Residues S88–I129 form a B box-type zinc finger. 4 residues coordinate Zn(2+): C93, H96, C115, and H121. The B30.2/SPRY domain maps to R271 to T445.

Belongs to the TRIM/RBCC family.

In Mus musculus (Mouse), this protein is Tripartite motif-containing protein 43B.